A 359-amino-acid polypeptide reads, in one-letter code: 3-dehydroquinate synthase (359 aa).

NAD(+) is bound by residues 106–110 (GVVGD), 130–131 (TS), Lys143, and Lys152. Zn(2+) is bound by residues Glu185, His246, and His262.

This sequence belongs to the sugar phosphate cyclases superfamily. Dehydroquinate synthase family. NAD(+) serves as cofactor. Requires Co(2+) as cofactor. It depends on Zn(2+) as a cofactor.

The protein localises to the cytoplasm. The enzyme catalyses 7-phospho-2-dehydro-3-deoxy-D-arabino-heptonate = 3-dehydroquinate + phosphate. It participates in metabolic intermediate biosynthesis; chorismate biosynthesis; chorismate from D-erythrose 4-phosphate and phosphoenolpyruvate: step 2/7. In terms of biological role, catalyzes the conversion of 3-deoxy-D-arabino-heptulosonate 7-phosphate (DAHP) to dehydroquinate (DHQ). This Lactiplantibacillus plantarum (strain ATCC BAA-793 / NCIMB 8826 / WCFS1) (Lactobacillus plantarum) protein is 3-dehydroquinate synthase.